Reading from the N-terminus, the 63-residue chain is UPF0434 protein GDI0182/Gdia_2252 (63 aa).

The protein belongs to the UPF0434 family.

The polypeptide is UPF0434 protein GDI0182/Gdia_2252 (Gluconacetobacter diazotrophicus (strain ATCC 49037 / DSM 5601 / CCUG 37298 / CIP 103539 / LMG 7603 / PAl5)).